Here is a 543-residue protein sequence, read N- to C-terminus: Cytochrome P450 monooxygenase CYP1 (543 aa).

The helical transmembrane segment at 40 to 60 threads the bilayer; sequence SSFFTRILIAFIGLCLLSIFS. 2 N-linked (GlcNAc...) asparagine glycosylation sites follow: asparagine 210 and asparagine 367. Heme is bound at residue cysteine 478. An N-linked (GlcNAc...) asparagine glycan is attached at asparagine 517.

It belongs to the cytochrome P450 family. Heme serves as cofactor.

It localises to the membrane. Its pathway is secondary metabolite biosynthesis. Cytochrome P450 monooxygenase; part of the gene cluster that mediates the biosynthesis of a tyrosine-derived cytochalasan acting as a fungal signal recognized by resistant rice plants and leads to avirulence in Pi33 resistant rice cultivars. The first step in the pathway is catalyzed by the hybrid PKS-NRPS ACE1, assisted by the enoyl reductase RAP1, that are responsible for fusion of the tyrosine precursor and the polyketide backbone. The polyketide synthase module (PKS) of ACE1 is responsible for the synthesis of the polyketide backbone and the downstream nonribosomal peptide synthetase (NRPS) amidates the carboxyl end of the polyketide with the tyrosine precursor. Because ACE1 lacks a designated enoylreductase (ER) domain, the required activity is provided the enoyl reductase RAP1. Reduction by the hydrolyase ORFZ, followed by dehydration and intra-molecular Diels-Alder cyclization by the Diels-Alderase ORF3 then yield the required isoindolone-fused macrocycle. A number of oxidative steps catalyzed by the tailoring enzymes identified within the cluster, including cytochrome P450 monooxygenases CYP1 to CYP4, the FAD-linked oxidoreductase OXR2 and the short-chain dehydrogenase/reductase OXR1, are further required to afford the final cytochalasans that confer avirulence and which have still to be identified. The monooxygenase CYP1 has been shown to be a site-selective C-18 hydroxylase whereas the function of CYP3 is the site-selective epoxidation of the C-6/C-7 olefin that is present in some intermediate compounds. Finally, SYN2 and RAP2 are not required for avirulence in Pi33 resistant rice cultivars. The chain is Cytochrome P450 monooxygenase CYP1 from Pyricularia oryzae (strain 70-15 / ATCC MYA-4617 / FGSC 8958) (Rice blast fungus).